Consider the following 58-residue polypeptide: Large ribosomal subunit protein bL32 (58 aa).

The interval 1–23 is disordered; that stretch reads MAVPARHTSSAKKNRRRTHYKLT. Residues 9 to 20 show a composition bias toward basic residues; sequence SSAKKNRRRTHY.

Belongs to the bacterial ribosomal protein bL32 family.

The chain is Large ribosomal subunit protein bL32 (rpmF) from Lactococcus lactis subsp. cremoris (Streptococcus cremoris).